The following is a 201-amino-acid chain: MSTEPTNQDQAPIDEALTQEVAQDEASLMDELTQANFRVEELEQLLAESQAALAERKDVEMRAAAETQNIRTRAAKDVEQARKFALEKFANELLPVIDNMERALQGTNPEDEATKAIYEGVELTMKGFLTSVEKFGVKQVNPQGETFNPDHHQAIGMQPSPDFPANTVMMVMQKGYLLNDRLLRPAMVMVSQGGPSVDIEA.

It belongs to the GrpE family. Homodimer.

The protein resides in the cytoplasm. Functionally, participates actively in the response to hyperosmotic and heat shock by preventing the aggregation of stress-denatured proteins, in association with DnaK and GrpE. It is the nucleotide exchange factor for DnaK and may function as a thermosensor. Unfolded proteins bind initially to DnaJ; upon interaction with the DnaJ-bound protein, DnaK hydrolyzes its bound ATP, resulting in the formation of a stable complex. GrpE releases ADP from DnaK; ATP binding to DnaK triggers the release of the substrate protein, thus completing the reaction cycle. Several rounds of ATP-dependent interactions between DnaJ, DnaK and GrpE are required for fully efficient folding. This is Protein GrpE from Shewanella denitrificans (strain OS217 / ATCC BAA-1090 / DSM 15013).